Here is a 350-residue protein sequence, read N- to C-terminus: C4-dicarboxylate-binding protein DctB (350 aa).

An N-terminal signal peptide occupies residues 1 to 18; that stretch reads MKSLLACLALMIAGIATA.

This sequence belongs to the bacterial solute-binding protein 7 family.

The protein localises to the secreted. In terms of biological role, part of the binding-protein-dependent transport system for uptake of C4-dicarboxylates. Responsible for growth on fumarate and succinate but not malate. Is not directly involved in C4-dicarboxylate uptake, but plays a sensory role in the DctS/DctR two-component system which regulates the expression of the dctA C4-dicarboxylate transporter. This Bacillus subtilis (strain 168) protein is C4-dicarboxylate-binding protein DctB (dctB).